We begin with the raw amino-acid sequence, 589 residues long: Transmembrane 9 superfamily member 1 (589 aa).

The signal sequence occupies residues 1 to 27; sequence MTVLGHPRSWSCHCLPVLILLLGIGHG. A glycan (N-linked (GlcNAc...) asparagine) is linked at N178. Helical transmembrane passes span 237 to 257, 310 to 330, 339 to 359, and 373 to 393; these read LSII…AVIL, VLGV…MALL, GAIN…SGYV, and VWNI…TWSV. N401 carries an N-linked (GlcNAc...) asparagine glycan. 3 helical membrane-spanning segments follow: residues 412–432, 482–502, and 518–538; these read ILLL…IGGI, GILF…SIAL, and SVLS…FYYA. N542 carries N-linked (GlcNAc...) asparagine glycosylation. A helical transmembrane segment spans residues 552–572; sequence FFGYSLLTGYVFFLMLGTISF.

This sequence belongs to the nonaspanin (TM9SF) (TC 9.A.2) family.

It localises to the lysosome membrane. It is found in the cytoplasmic vesicle. Its subcellular location is the autophagosome membrane. Plays an essential role in autophagy. This chain is Transmembrane 9 superfamily member 1 (Tm9sf1), found in Rattus norvegicus (Rat).